The primary structure comprises 203 residues: Acid phosphatase (203 aa).

Catalysis depends on histidine 13, which acts as the Tele-phosphohistidine intermediate. Glutamate 85 acts as the Proton donor/acceptor in catalysis.

Belongs to the phosphoglycerate mutase family. In terms of assembly, homodimer.

It carries out the reaction a phosphate monoester + H2O = an alcohol + phosphate. The enzyme catalyses beta-D-fructose 1,6-bisphosphate + H2O = beta-D-fructose 6-phosphate + phosphate. Its pathway is carbohydrate biosynthesis; gluconeogenesis. Its activity is regulated as follows. In contrast to classical FBPases, is resistant to inhibition by lithium. In terms of biological role, phosphatase with a broad specificity. Can dephosphorylate a variety of substrates including phosphorylated sugars like fructose-6-phosphate (F6P). Is able to function in vivo as a fructose-1,6-bisphosphatase (FBPase) and to maintain gluconeogenesis when the classical FBPase GlpX is absent. Shows negligible phosphoglycerate mutase activity. Has no phosphatase activity against 3-phosphoglycerate, 2,3-bisphosphoglycerate, or hydrophobic substrates such as alpha-napthyl phosphate. The polypeptide is Acid phosphatase (Mycobacterium tuberculosis (strain ATCC 25618 / H37Rv)).